A 144-amino-acid polypeptide reads, in one-letter code: 3-dehydroquinate dehydratase (144 aa).

Y22 functions as the Proton acceptor in the catalytic mechanism. Substrate-binding residues include N73, H79, and D86. Residue H99 is the Proton donor of the active site. Substrate is bound by residues 100-101 (LS) and R110.

Belongs to the type-II 3-dehydroquinase family. As to quaternary structure, homododecamer.

The enzyme catalyses 3-dehydroquinate = 3-dehydroshikimate + H2O. It participates in metabolic intermediate biosynthesis; chorismate biosynthesis; chorismate from D-erythrose 4-phosphate and phosphoenolpyruvate: step 3/7. Functionally, catalyzes a trans-dehydration via an enolate intermediate. In Pelotomaculum thermopropionicum (strain DSM 13744 / JCM 10971 / SI), this protein is 3-dehydroquinate dehydratase.